The following is a 153-amino-acid chain: Prostaglandin E synthase (153 aa).

At 1 to 13 (MPPSGLELMNGQV) the chain is on the lumenal side. The chain crosses the membrane as a helical span at residues 14-42 (LPAFLLCSALLVIKMYVVAVITGQVRLRK). Arginine 39 provides a ligand contact to glutathione. Over 43–61 (KAFANPEDAQRHGGLQYCR) the chain is Cytoplasmic. The chain crosses the membrane as a helical span at residues 62–91 (NDPDVERCLRAHRNDMETIYPFLFLGFVYS). 74–78 (RNDME) contributes to the glutathione binding site. Residues 92–96 (FLGPN) lie on the Lumenal side of the membrane. The chain crosses the membrane as a helical span at residues 97-120 (PFVARMHFLVFFLGRMVHTVAYLG). Residues histidine 114 and tyrosine 118 each contribute to the glutathione site. Residues 121–124 (KLRA) are Cytoplasmic-facing. Residues 125-153 (PTRSLAYTLAQLPCASMALQIVWEAARHL) form a helical membrane-spanning segment. 127 to 131 (RSLAY) is a binding site for glutathione.

Belongs to the MAPEG family. Homotrimer. Glutathione is required as a cofactor.

The protein localises to the membrane. It localises to the cytoplasm. Its subcellular location is the perinuclear region. It carries out the reaction prostaglandin H2 = prostaglandin E2. The enzyme catalyses 2-glyceryl-prostaglandin H2 = 2-glyceryl-prostaglandin E2. It catalyses the reaction prostaglandin G2 = (15S)-15-hydroperoxy-prostaglandin E2. The catalysed reaction is 1-chloro-2,4-dinitrobenzene + glutathione = 2,4-dinitrophenyl-S-glutathione + chloride + H(+). It carries out the reaction (5S)-hydroperoxy-(6E,8Z,11Z,14Z)-eicosatetraenoate + 2 glutathione = (5S)-hydroxy-(6E,8Z,11Z,14Z)-eicosatetraenoate + glutathione disulfide + H2O. It functions in the pathway lipid metabolism; prostaglandin biosynthesis. In terms of biological role, terminal enzyme of the cyclooxygenase (COX)-2-mediated prostaglandin E2 (PGE2) biosynthetic pathway. Catalyzes the glutathione-dependent oxidoreduction of prostaglandin endoperoxide H2 (PGH2) to prostaglandin E2 (PGE2) in response to inflammatory stimuli. Plays a key role in inflammation response, fever and pain. Also catalyzes the oxidoreduction of endocannabinoids into prostaglandin glycerol esters and PGG2 into 15-hydroperoxy-PGE2. In addition, displays low glutathione transferase and glutathione-dependent peroxidase activities, toward 1-chloro-2,4-dinitrobenzene and 5-hydroperoxyicosatetraenoic acid (5-HPETE), respectively. The polypeptide is Prostaglandin E synthase (PTGES) (Bos taurus (Bovine)).